The following is a 487-amino-acid chain: 3-octaprenyl-4-hydroxybenzoate carboxy-lyase (487 aa).

Asn-172 contacts Mn(2+). Prenylated FMN is bound by residues Ile-175 to Arg-177, Arg-189 to Leu-191, and Arg-194 to Gly-195. Glu-238 provides a ligand contact to Mn(2+). The Proton donor role is filled by Asp-287.

The protein belongs to the UbiD family. Homohexamer. It depends on prenylated FMN as a cofactor. Mn(2+) is required as a cofactor.

It localises to the cell membrane. It catalyses the reaction a 4-hydroxy-3-(all-trans-polyprenyl)benzoate + H(+) = a 2-(all-trans-polyprenyl)phenol + CO2. It functions in the pathway cofactor biosynthesis; ubiquinone biosynthesis. Its function is as follows. Catalyzes the decarboxylation of 3-octaprenyl-4-hydroxy benzoate to 2-octaprenylphenol, an intermediate step in ubiquinone biosynthesis. The sequence is that of 3-octaprenyl-4-hydroxybenzoate carboxy-lyase from Nitrosospira multiformis (strain ATCC 25196 / NCIMB 11849 / C 71).